Consider the following 527-residue polypeptide: Hopanoid C-2 methylase (527 aa).

In terms of domain architecture, B12-binding spans 36–148 (VAAFMPPQGL…AKLTHDVTRP (113 aa)). The region spanning 173–408 (AECSKYLLGS…HDQVVAMWKD (236 aa)) is the Radical SAM core domain. The [4Fe-4S] cluster site is built by cysteine 189, cysteine 193, and cysteine 196.

It belongs to the radical SAM superfamily. It depends on [4Fe-4S] cluster as a cofactor.

Functionally, required for methylation of hopanoids at the C-2 position. This Rhodopseudomonas palustris (strain TIE-1) protein is Hopanoid C-2 methylase.